The primary structure comprises 738 residues: Phosphoribosylformylglycinamidine synthase subunit PurL (738 aa).

H53 is a catalytic residue. 2 residues coordinate ATP: Y56 and K95. E97 contributes to the Mg(2+) binding site. Substrate contacts are provided by residues 98–101 (SHNH) and R120. The Proton acceptor role is filled by H99. D121 is a binding site for Mg(2+). Residue Q244 participates in substrate binding. D274 provides a ligand contact to Mg(2+). Residue 318–320 (ESQ) coordinates substrate. ATP contacts are provided by D499 and G536. N537 contacts Mg(2+). S539 is a binding site for substrate.

This sequence belongs to the FGAMS family. As to quaternary structure, monomer. Part of the FGAM synthase complex composed of 1 PurL, 1 PurQ and 2 PurS subunits.

It localises to the cytoplasm. It carries out the reaction N(2)-formyl-N(1)-(5-phospho-beta-D-ribosyl)glycinamide + L-glutamine + ATP + H2O = 2-formamido-N(1)-(5-O-phospho-beta-D-ribosyl)acetamidine + L-glutamate + ADP + phosphate + H(+). Its pathway is purine metabolism; IMP biosynthesis via de novo pathway; 5-amino-1-(5-phospho-D-ribosyl)imidazole from N(2)-formyl-N(1)-(5-phospho-D-ribosyl)glycinamide: step 1/2. Its function is as follows. Part of the phosphoribosylformylglycinamidine synthase complex involved in the purines biosynthetic pathway. Catalyzes the ATP-dependent conversion of formylglycinamide ribonucleotide (FGAR) and glutamine to yield formylglycinamidine ribonucleotide (FGAM) and glutamate. The FGAM synthase complex is composed of three subunits. PurQ produces an ammonia molecule by converting glutamine to glutamate. PurL transfers the ammonia molecule to FGAR to form FGAM in an ATP-dependent manner. PurS interacts with PurQ and PurL and is thought to assist in the transfer of the ammonia molecule from PurQ to PurL. The chain is Phosphoribosylformylglycinamidine synthase subunit PurL from Leuconostoc mesenteroides subsp. mesenteroides (strain ATCC 8293 / DSM 20343 / BCRC 11652 / CCM 1803 / JCM 6124 / NCDO 523 / NBRC 100496 / NCIMB 8023 / NCTC 12954 / NRRL B-1118 / 37Y).